The sequence spans 166 residues: Large ribosomal subunit protein uL10 (166 aa).

It belongs to the universal ribosomal protein uL10 family. In terms of assembly, part of the ribosomal stalk of the 50S ribosomal subunit. The N-terminus interacts with L11 and the large rRNA to form the base of the stalk. The C-terminus forms an elongated spine to which L12 dimers bind in a sequential fashion forming a multimeric L10(L12)X complex.

Functionally, forms part of the ribosomal stalk, playing a central role in the interaction of the ribosome with GTP-bound translation factors. The sequence is that of Large ribosomal subunit protein uL10 from Stutzerimonas stutzeri (strain A1501) (Pseudomonas stutzeri).